A 464-amino-acid polypeptide reads, in one-letter code: Arylsulfatase (464 aa).

The signal sequence occupies residues 1 to 20 (MNKKAMAAAVSMILAGGAHA). Residues aspartate 34, aspartate 35, and serine 72 each contribute to the Ca(2+) site. Serine 72 functions as the Nucleophile in the catalytic mechanism. A 3-oxoalanine (Ser) modification is found at serine 72. Residue histidine 134 is part of the active site. 2 residues coordinate Ca(2+): aspartate 329 and asparagine 330.

This sequence belongs to the sulfatase family. Ca(2+) serves as cofactor. In terms of processing, the conversion to 3-oxoalanine (also known as C-formylglycine, FGly), of a serine or cysteine residue in prokaryotes and of a cysteine residue in eukaryotes, is critical for catalytic activity.

Its subcellular location is the periplasm. It catalyses the reaction an aryl sulfate + H2O = a phenol + sulfate + H(+). Plays an important role in the mineralization of sulfates. The polypeptide is Arylsulfatase (atsA) (Klebsiella aerogenes (Enterobacter aerogenes)).